The chain runs to 253 residues: Pimeloyl-[acyl-carrier protein] methyl ester esterase (253 aa).

Substrate-binding positions include W18, 78-79 (SL), and 139-143 (FLALD). S78 serves as the catalytic Nucleophile. Catalysis depends on residues D203 and H231. H231 is a substrate binding site.

It belongs to the AB hydrolase superfamily. Carboxylesterase BioH family. As to quaternary structure, monomer.

The protein localises to the cytoplasm. It carries out the reaction 6-carboxyhexanoyl-[ACP] methyl ester + H2O = 6-carboxyhexanoyl-[ACP] + methanol + H(+). Its pathway is cofactor biosynthesis; biotin biosynthesis. Functionally, the physiological role of BioH is to remove the methyl group introduced by BioC when the pimeloyl moiety is complete. It allows to synthesize pimeloyl-ACP via the fatty acid synthetic pathway through the hydrolysis of the ester bonds of pimeloyl-ACP esters. This is Pimeloyl-[acyl-carrier protein] methyl ester esterase from Xanthomonas oryzae pv. oryzae (strain MAFF 311018).